The chain runs to 523 residues: (R)-citramalate synthase (523 aa).

The Pyruvate carboxyltransferase domain maps to 6–272; sequence VEVLDTTLRD…KGNESLKKLK (267 aa).

Belongs to the alpha-IPM synthase/homocitrate synthase family.

It catalyses the reaction pyruvate + acetyl-CoA + H2O = (3R)-citramalate + CoA + H(+). The protein operates within amino-acid biosynthesis; L-isoleucine biosynthesis; 2-oxobutanoate from pyruvate: step 1/3. With respect to regulation, inhibited by isoleucine. Its function is as follows. Catalyzes the condensation of pyruvate and acetyl-coenzyme A to form (R)-citramalate. Makes part of a pathway for isoleucine biosynthesis, i.e. the citramalate-dependent pathway. Also displays a low alpha-isopropylmalate synthase activity, using 2-oxoisovalerate as substrate, but is unable to use 2-oxoglutarate. This chain is (R)-citramalate synthase, found in Sulfolobus acidocaldarius (strain ATCC 33909 / DSM 639 / JCM 8929 / NBRC 15157 / NCIMB 11770).